The primary structure comprises 113 residues: Small ribosomal subunit protein uS17 (113 aa).

The protein belongs to the universal ribosomal protein uS17 family. As to quaternary structure, part of the 30S ribosomal subunit.

Its function is as follows. One of the primary rRNA binding proteins, it binds specifically to the 5'-end of 16S ribosomal RNA. This Pyrococcus furiosus (strain ATCC 43587 / DSM 3638 / JCM 8422 / Vc1) protein is Small ribosomal subunit protein uS17.